An 878-amino-acid chain; its full sequence is Serine/threonine-protein kinase N3 (878 aa).

REM-1 domains follow at residues 2-77, 86-165, and 169-238; these read EHRK…QVLL, SEPQ…SGSP, and PDLL…RLPP. Ser-164 bears the Phosphoserine mark. Positions 461 to 525 are disordered; that stretch reads PNTASPPKGR…TPCTKRPHMD (65 aa). Residues 548–807 form the Protein kinase domain; the sequence is FRCLAVLGRG…AEEIKVQPFF (260 aa). ATP is bound by residues 554-562 and Lys-577; that span reads LGRGHFGKV. Asp-673 serves as the catalytic Proton acceptor. Thr-707, Thr-711, and Thr-849 each carry phosphothreonine. An AGC-kinase C-terminal domain is found at 808-878; that stretch reads RTTNWQALLA…DFVSEQFLES (71 aa).

It belongs to the protein kinase superfamily. AGC Ser/Thr protein kinase family. PKC subfamily. Post-translationally, autophosphorylated.

It is found in the nucleus. The protein localises to the cytoplasm. Its subcellular location is the perinuclear region. The enzyme catalyses L-seryl-[protein] + ATP = O-phospho-L-seryl-[protein] + ADP + H(+). It carries out the reaction L-threonyl-[protein] + ATP = O-phospho-L-threonyl-[protein] + ADP + H(+). Two specific sites, Thr-707 (activation loop of the kinase domain) and Thr-849 (turn motif), need to be phosphorylated for its full activation. Functionally, contributes to invasiveness in malignant prostate cancer. The chain is Serine/threonine-protein kinase N3 (Pkn3) from Mus musculus (Mouse).